The sequence spans 192 residues: UPF0301 protein BTH_I1462 (192 aa).

The protein belongs to the UPF0301 (AlgH) family.

In Burkholderia thailandensis (strain ATCC 700388 / DSM 13276 / CCUG 48851 / CIP 106301 / E264), this protein is UPF0301 protein BTH_I1462.